A 96-amino-acid chain; its full sequence is Pollen allergen Dac g 3 (96 aa).

The Expansin-like CBD domain maps to 14–94 (KKLVLDIKYT…AFKIGTTYTP (81 aa)).

Belongs to the expansin family. Expansin B subfamily.

The protein resides in the secreted. This Dactylis glomerata (Orchard grass) protein is Pollen allergen Dac g 3.